A 133-amino-acid chain; its full sequence is ATP synthase epsilon chain, chloroplastic (133 aa).

It belongs to the ATPase epsilon chain family. In terms of assembly, F-type ATPases have 2 components, CF(1) - the catalytic core - and CF(0) - the membrane proton channel. CF(1) has five subunits: alpha(3), beta(3), gamma(1), delta(1), epsilon(1). CF(0) has three main subunits: a, b and c.

It localises to the plastid. The protein localises to the chloroplast thylakoid membrane. Functionally, produces ATP from ADP in the presence of a proton gradient across the membrane. The polypeptide is ATP synthase epsilon chain, chloroplastic (Morus indica (Mulberry)).